We begin with the raw amino-acid sequence, 248 residues long: Phycocyanobilin:ferredoxin oxidoreductase (248 aa).

The protein belongs to the HY2 family.

The catalysed reaction is (2R,3Z)-phycocyanobilin + 4 oxidized [2Fe-2S]-[ferredoxin] = biliverdin IXalpha + 4 reduced [2Fe-2S]-[ferredoxin] + 4 H(+). Functionally, catalyzes the four-electron reduction of biliverdin IX-alpha (2-electron reduction at both the A and D rings); the reaction proceeds via an isolatable 2-electron intermediate, 181,182-dihydrobiliverdin. The sequence is that of Phycocyanobilin:ferredoxin oxidoreductase from Synechococcus sp. (strain ATCC 27144 / PCC 6301 / SAUG 1402/1) (Anacystis nidulans).